A 358-amino-acid chain; its full sequence is Chorismate synthase (358 aa).

Arg46 lines the NADP(+) pocket. FMN contacts are provided by residues 123–125 (RSS), 235–236 (NA), Gly275, 290–294 (KPTPS), and Arg316.

Belongs to the chorismate synthase family. As to quaternary structure, homotetramer. FMNH2 is required as a cofactor.

The enzyme catalyses 5-O-(1-carboxyvinyl)-3-phosphoshikimate = chorismate + phosphate. Its pathway is metabolic intermediate biosynthesis; chorismate biosynthesis; chorismate from D-erythrose 4-phosphate and phosphoenolpyruvate: step 7/7. Its function is as follows. Catalyzes the anti-1,4-elimination of the C-3 phosphate and the C-6 proR hydrogen from 5-enolpyruvylshikimate-3-phosphate (EPSP) to yield chorismate, which is the branch point compound that serves as the starting substrate for the three terminal pathways of aromatic amino acid biosynthesis. This reaction introduces a second double bond into the aromatic ring system. The protein is Chorismate synthase of Helicobacter hepaticus (strain ATCC 51449 / 3B1).